A 339-amino-acid polypeptide reads, in one-letter code: Phomopsene synthase (339 aa).

5 residues coordinate Mg(2+): D89, D94, N224, S228, and E232.

Belongs to the terpene synthase family. Mg(2+) is required as a cofactor.

The catalysed reaction is (2E,6E,10E)-geranylgeranyl diphosphate = phomopsene + diphosphate. It catalyses the reaction (2E,6E,10E)-geranylgeranyl diphosphate = allokutznerene + diphosphate. It participates in secondary metabolite biosynthesis; terpenoid biosynthesis. Diterpene synthase that catalyzes the conversion of geranylgeranyl diphosphate (GGPP) to phomopsene, a diterpene previously reported from the fungus P.amygdali. Phomopsene is the main product, but the enzyme can also produce allokutznerene (about 50% of phomopsene production activity) and traces of spiroviolene. Cannot use geranyl diphosphate (GPP), farnesyl diphosphate (FPP) and geranylfarnesyl diphosphate (GFPP). The protein is Phomopsene synthase of Allokutzneria albata (Kibdelosporangium albatum).